Consider the following 276-residue polypeptide: Diaminopimelate epimerase (276 aa).

Substrate is bound by residues Asn11, Gln44, and Asn64. The Proton donor role is filled by Cys73. Residues 74 to 75 (GN), Asn157, Asn190, and 208 to 209 (ER) contribute to the substrate site. The active-site Proton acceptor is the Cys217. 218 to 219 (GS) is a substrate binding site.

The protein belongs to the diaminopimelate epimerase family. Homodimer.

Its subcellular location is the cytoplasm. It catalyses the reaction (2S,6S)-2,6-diaminopimelate = meso-2,6-diaminopimelate. It functions in the pathway amino-acid biosynthesis; L-lysine biosynthesis via DAP pathway; DL-2,6-diaminopimelate from LL-2,6-diaminopimelate: step 1/1. Catalyzes the stereoinversion of LL-2,6-diaminopimelate (L,L-DAP) to meso-diaminopimelate (meso-DAP), a precursor of L-lysine and an essential component of the bacterial peptidoglycan. The chain is Diaminopimelate epimerase from Blochmanniella floridana.